The chain runs to 508 residues: MEEYQDQVYLELDISRQQHFLYPLIFREYIYGLVYGHDFNGSIFSENVDYDNKSSLLIVKRLITRMDQQNHLIISANDSKKKKFLSYNKNLYSQIISEGFAIVVEIPLSLQLNSSSEESKIIKYYKNLRSIHSIFPFFEDKLTYLNYVSDARIPYPIHLEILVQVFRYWAKDAPFFHLLRLFFYEYCNWNNLITPKKSISTFSKSNLRVFLFLYNFYVCEYESIFLFLRNKSSHLRLTSFSVLFERIYFYGKIEHFLEVFAKDFSSTLSFFKELFIHYVRYQEKYILASKNASLLMNKWKNYLIRLWQYHFDVWSQPRTIQINQFSEGSFHLLGYFSNVRLNRSAVRSQMLENSFLIEIVMKKLETIVPIIPLIRSLAKAKFCNVLGHPISKPVWADSSDFHIIDRFLRICRNLSHYYNGSSKKKSLYRVKYILRLSCIKTLARKHKSTVRAFLKRLGSEKLLEEFFTEEEEILSLVFQRASSTLQGFYRGRVWYLDIIFSNDLVNHE.

The protein belongs to the intron maturase 2 family. MatK subfamily.

It localises to the plastid. Its subcellular location is the chloroplast. Its function is as follows. Usually encoded in the trnK tRNA gene intron. Probably assists in splicing its own and other chloroplast group II introns. This is Maturase K from Lupinus cosentinii (West Australian blue lupine).